A 438-amino-acid chain; its full sequence is UDP-N-acetylmuramoylalanine--D-glutamate ligase (438 aa).

112-118 (GSNGKST) contacts ATP.

This sequence belongs to the MurCDEF family. Requires Mg(2+) as cofactor.

It is found in the cytoplasm. It carries out the reaction UDP-N-acetyl-alpha-D-muramoyl-L-alanine + D-glutamate + ATP = UDP-N-acetyl-alpha-D-muramoyl-L-alanyl-D-glutamate + ADP + phosphate + H(+). The protein operates within cell wall biogenesis; peptidoglycan biosynthesis. Functionally, cell wall formation. Catalyzes the addition of glutamate to the nucleotide precursor UDP-N-acetylmuramoyl-L-alanine (UMA). The protein is UDP-N-acetylmuramoylalanine--D-glutamate ligase (murD) of Escherichia coli (strain K12).